The sequence spans 166 residues: 2-C-methyl-D-erythritol 2,4-cyclodiphosphate synthase (166 aa).

A divalent metal cation contacts are provided by Asp-15 and His-17. 4-CDP-2-C-methyl-D-erythritol 2-phosphate contacts are provided by residues 15-17 and 43-44; these read DIH and HS. His-51 lines the a divalent metal cation pocket. Residues 65–67, 141–144, and Arg-151 each bind 4-CDP-2-C-methyl-D-erythritol 2-phosphate; these read DIG and TTNE.

This sequence belongs to the IspF family. As to quaternary structure, homotrimer. A divalent metal cation serves as cofactor.

The enzyme catalyses 4-CDP-2-C-methyl-D-erythritol 2-phosphate = 2-C-methyl-D-erythritol 2,4-cyclic diphosphate + CMP. It functions in the pathway isoprenoid biosynthesis; isopentenyl diphosphate biosynthesis via DXP pathway; isopentenyl diphosphate from 1-deoxy-D-xylulose 5-phosphate: step 4/6. Functionally, involved in the biosynthesis of isopentenyl diphosphate (IPP) and dimethylallyl diphosphate (DMAPP), two major building blocks of isoprenoid compounds. Catalyzes the conversion of 4-diphosphocytidyl-2-C-methyl-D-erythritol 2-phosphate (CDP-ME2P) to 2-C-methyl-D-erythritol 2,4-cyclodiphosphate (ME-CPP) with a corresponding release of cytidine 5-monophosphate (CMP). The chain is 2-C-methyl-D-erythritol 2,4-cyclodiphosphate synthase from Prochlorococcus marinus (strain MIT 9215).